The sequence spans 123 residues: Ribulose bisphosphate carboxylase small subunit, chloroplastic 1 (123 aa).

Methionine 1 carries the methionine derivative modification.

Belongs to the RuBisCO small chain family. As to quaternary structure, heterohexadecamer of 8 large and 8 small subunits.

The protein resides in the plastid. It localises to the chloroplast. Functionally, ruBisCO catalyzes two reactions: the carboxylation of D-ribulose 1,5-bisphosphate, the primary event in carbon dioxide fixation, as well as the oxidative fragmentation of the pentose substrate. Both reactions occur simultaneously and in competition at the same active site. Although the small subunit is not catalytic it is essential for maximal activity. This is Ribulose bisphosphate carboxylase small subunit, chloroplastic 1 from Spinacia oleracea (Spinach).